We begin with the raw amino-acid sequence, 187 residues long: MDIDPYKEFGSSYQLLNFLPLDFFPELNALVDTATALYEEELTGREHCSPHHTAIRQALVCWEELTRLIAWMSANINSEEVRRVIVAHVNDTWGLKVRQNLWFHLSCLTFGQHTVQEFLVSFGVRIRTPAPYRPPNAPILSTLPEHTVIRRRGSARVVRSPRRRTPSPRRRRSQSPRRRPQSPASNC.

Over residues 151 to 180 (RRGSARVVRSPRRRTPSPRRRRSQSPRRRP) the composition is skewed to basic residues. A disordered region spans residues 151 to 187 (RRGSARVVRSPRRRTPSPRRRRSQSPRRRPQSPASNC). Phosphoserine; by host is present on residues Ser-160, Ser-167, and Ser-175. 3 consecutive repeat copies span residues 160-164 (SPRRR), 167-171 (SPRRR), and 175-179 (SPRRR). A 3 X 5 AA repeats of S-P-R-R-R region spans residues 160-179 (SPRRRTPSPRRRRSQSPRRR). The short motif at 163 to 180 (RRTPSPRRRRSQSPRRRP) is the Bipartite nuclear localization signal element. Residues 181–187 (QSPASNC) are RNA binding.

This sequence belongs to the orthohepadnavirus core antigen family. In terms of assembly, homodimerizes, then multimerizes. Interacts with cytosol exposed regions of viral L glycoprotein present in the reticulum-to-Golgi compartment. Interacts with human FLNB. Phosphorylated form interacts with host importin alpha; this interaction depends on the exposure of the NLS, which itself depends upon genome maturation and/or phosphorylation of the capsid protein. Interacts with host NUP153. Post-translationally, phosphorylated by host SRPK1, SRPK2, and maybe protein kinase C or GAPDH. Phosphorylation is critical for pregenomic RNA packaging. Protein kinase C phosphorylation is stimulated by HBx protein and may play a role in transport of the viral genome to the nucleus at the late step during the viral replication cycle.

Its subcellular location is the virion. It is found in the host cytoplasm. In terms of biological role, self assembles to form an icosahedral capsid. Most capsids appear to be large particles with an icosahedral symmetry of T=4 and consist of 240 copies of capsid protein, though a fraction forms smaller T=3 particles consisting of 180 capsid proteins. Entering capsids are transported along microtubules to the nucleus. Phosphorylation of the capsid is thought to induce exposure of nuclear localization signal in the C-terminal portion of the capsid protein that allows binding to the nuclear pore complex via the importin (karyopherin-) alpha and beta. Capsids are imported in intact form through the nuclear pore into the nuclear basket, where it probably binds NUP153. Only capsids that contain the mature viral genome can release the viral DNA and capsid protein into the nucleoplasm. Immature capsids get stuck in the basket. Capsids encapsulate the pre-genomic RNA and the P protein. Pre-genomic RNA is reverse-transcribed into DNA while the capsid is still in the cytoplasm. The capsid can then either be directed to the nucleus, providing more genomes for transcription, or bud through the endoplasmic reticulum to provide new virions. In Urocitellus parryii kennicottii (ASHV), this protein is Capsid protein.